A 383-amino-acid chain; its full sequence is MINEDIDILSLDNKIKLHFESEIQKYKRYNERLLCIENLLKIENLRPKIFLDLLMDKKYLEKKLVNLSNLDLYSIETSDIIHRYLTIINTPLNIEVALTSQKPTEINNLVLKRRETVQEFIKVAKSYLTEPLLKSLQLMGNFGKEDLLNSIPVVCTCGNDKDFYKDDDIYICQLCNAETVKLLNSSSVNDGGRINVCNKYTYDRKVHFKDCINQYQGKQNTNINPRIYDELEEQLVNHQIIEPANKKDKFGNPISQSKRFKIVTRAHILFFLKELGYTKHYEDTILIHYTLTGKRPDNIEHLEEKLMADFDKLTEQYDLLFKDIERKNFINTQYVLFQLLRKHGYNCNKDDFAVLKTTERKACHDDICKTLFDALGWKYMFVM.

The protein belongs to the IIV-6 282R family.

Transcription activation. This Acheta domesticus (House cricket) protein is Putative transcription factor 282R.